The primary structure comprises 338 residues: Lipoate-protein ligase A (338 aa).

The region spanning proline 29 to valine 216 is the BPL/LPL catalytic domain. Residues arginine 71, glycine 76–phenylalanine 79, and lysine 134 contribute to the ATP site. Lysine 134 lines the (R)-lipoate pocket.

It belongs to the LplA family. Monomer.

The protein localises to the cytoplasm. It carries out the reaction L-lysyl-[lipoyl-carrier protein] + (R)-lipoate + ATP = N(6)-[(R)-lipoyl]-L-lysyl-[lipoyl-carrier protein] + AMP + diphosphate + H(+). Its pathway is protein modification; protein lipoylation via exogenous pathway; protein N(6)-(lipoyl)lysine from lipoate: step 1/2. The protein operates within protein modification; protein lipoylation via exogenous pathway; protein N(6)-(lipoyl)lysine from lipoate: step 2/2. Functionally, catalyzes both the ATP-dependent activation of exogenously supplied lipoate to lipoyl-AMP and the transfer of the activated lipoyl onto the lipoyl domains of lipoate-dependent enzymes. This is Lipoate-protein ligase A from Escherichia coli O81 (strain ED1a).